Reading from the N-terminus, the 275-residue chain is Large ribosomal subunit protein uL2c (275 aa).

Disordered regions lie at residues 1–30 (MAIH…QKQK) and 225–275 (MNPV…RRRK). A compositionally biased stretch (polar residues) spans 21–30 (QAKSTPQKQK).

The protein belongs to the universal ribosomal protein uL2 family. In terms of assembly, part of the 50S ribosomal subunit.

The protein localises to the plastid. The protein resides in the chloroplast. The sequence is that of Large ribosomal subunit protein uL2c (rpl2) from Illicium oligandrum (Star anise).